Consider the following 153-residue polypeptide: ATP synthase subunit a (153 aa).

2 consecutive transmembrane segments (helical) span residues 43–63 and 104–124; these read AFHLDTLGWSVALGLIFLLIF and IAPLALTIFVWVFLMNAVDLI.

This sequence belongs to the ATPase A chain family. In terms of assembly, F-type ATPases have 2 components, CF(1) - the catalytic core - and CF(0) - the membrane proton channel. CF(1) has five subunits: alpha(3), beta(3), gamma(1), delta(1), epsilon(1). CF(0) has three main subunits: a(1), b(2) and c(9-12). The alpha and beta chains form an alternating ring which encloses part of the gamma chain. CF(1) is attached to CF(0) by a central stalk formed by the gamma and epsilon chains, while a peripheral stalk is formed by the delta and b chains.

It localises to the cell inner membrane. Key component of the proton channel; it plays a direct role in the translocation of protons across the membrane. The polypeptide is ATP synthase subunit a (atpB) (Pseudomonas putida (Arthrobacter siderocapsulatus)).